Consider the following 344-residue polypeptide: Glycerol-3-phosphate dehydrogenase [NAD(P)+] (344 aa).

The NADPH site is built by Ser18, Tyr19, His39, and Lys113. Sn-glycerol 3-phosphate-binding residues include Lys113, Gly142, and Thr144. An NADPH-binding site is contributed by Ala146. Residues Lys198, Asp251, Ser261, Arg262, and Asn263 each contribute to the sn-glycerol 3-phosphate site. Lys198 (proton acceptor) is an active-site residue. Arg262 serves as a coordination point for NADPH. NADPH is bound by residues Ile286 and Glu288.

It belongs to the NAD-dependent glycerol-3-phosphate dehydrogenase family.

The protein localises to the cytoplasm. It catalyses the reaction sn-glycerol 3-phosphate + NAD(+) = dihydroxyacetone phosphate + NADH + H(+). The catalysed reaction is sn-glycerol 3-phosphate + NADP(+) = dihydroxyacetone phosphate + NADPH + H(+). It functions in the pathway membrane lipid metabolism; glycerophospholipid metabolism. Its function is as follows. Catalyzes the reduction of the glycolytic intermediate dihydroxyacetone phosphate (DHAP) to sn-glycerol 3-phosphate (G3P), the key precursor for phospholipid synthesis. This Blochmanniella pennsylvanica (strain BPEN) protein is Glycerol-3-phosphate dehydrogenase [NAD(P)+].